The primary structure comprises 169 residues: Probable actin-related protein 2/3 complex subunit 4 (169 aa).

It belongs to the ARPC4 family. In terms of assembly, component of the Arp2/3 complex, at least composed of arx-1, arx-2, arx-4 and arx-6.

It is found in the cytoplasm. Its subcellular location is the cytoskeleton. Functions as actin-binding component of the Arp2/3 complex which is involved in regulation of actin polymerization and together with an activating nucleation-promoting factor (NPF) mediates the formation of branched actin networks. Seems to contact the mother actin filament. Plays a role in time-dependent memory loss and the retention of conditioned behavior over time. This is Probable actin-related protein 2/3 complex subunit 4 from Caenorhabditis elegans.